A 361-amino-acid polypeptide reads, in one-letter code: S-adenosylmethionine decarboxylase proenzyme (361 aa).

Catalysis depends on residues Glu13 and Glu16. Ser73 acts as the Schiff-base intermediate with substrate; via pyruvic acid in catalysis. At Ser73 the chain carries Pyruvic acid (Ser); by autocatalysis. Catalysis depends on Cys87, which acts as the Proton donor; for catalytic activity. Residues Ser236 and His249 each act as proton acceptor; for processing activity in the active site.

This sequence belongs to the eukaryotic AdoMetDC family. Requires pyruvate as cofactor. In terms of processing, is synthesized initially as an inactive proenzyme. Formation of the active enzyme involves a self-maturation process in which the active site pyruvoyl group is generated from an internal serine residue via an autocatalytic post-translational modification. Two non-identical subunits are generated from the proenzyme in this reaction, and the pyruvate is formed at the N-terminus of the alpha chain, which is derived from the carboxyl end of the proenzyme. The post-translation cleavage follows an unusual pathway, termed non-hydrolytic serinolysis, in which the side chain hydroxyl group of the serine supplies its oxygen atom to form the C-terminus of the beta chain, while the remainder of the serine residue undergoes an oxidative deamination to produce ammonia and the pyruvoyl group blocking the N-terminus of the alpha chain.

The enzyme catalyses S-adenosyl-L-methionine + H(+) = S-adenosyl 3-(methylsulfanyl)propylamine + CO2. The protein operates within amine and polyamine biosynthesis; S-adenosylmethioninamine biosynthesis; S-adenosylmethioninamine from S-adenosyl-L-methionine: step 1/1. This is S-adenosylmethionine decarboxylase proenzyme (SAMDC1) from Nicotiana sylvestris (Wood tobacco).